The following is a 1171-amino-acid chain: ATP-dependent helicase/deoxyribonuclease subunit B (1171 aa).

This sequence belongs to the helicase family. AddB/RexB type 2 subfamily. As to quaternary structure, heterodimer of AddA and RexB. Requires Mg(2+) as cofactor.

Functionally, the heterodimer acts as both an ATP-dependent DNA helicase and an ATP-dependent, dual-direction single-stranded exonuclease. Recognizes the chi site generating a DNA molecule suitable for the initiation of homologous recombination. This subunit has 5' -&gt; 3' nuclease activity but not helicase activity. The sequence is that of ATP-dependent helicase/deoxyribonuclease subunit B from Leuconostoc citreum (strain KM20).